Here is a 149-residue protein sequence, read N- to C-terminus: uncharacterized protein (149 aa).

Residues 34–94 form a disordered region; that stretch reads HTPCLPKVPR…NPIGSQRIHS (61 aa). Residues 56–66 show a composition bias toward basic and acidic residues; sequence QSPHRQGDRRR.

The protein localises to the mitochondrion. This is an uncharacterized protein from Arabidopsis thaliana (Mouse-ear cress).